The primary structure comprises 181 residues: UPF0302 protein LMOf2365_1950 (181 aa).

The protein belongs to the UPF0302 family.

The polypeptide is UPF0302 protein LMOf2365_1950 (Listeria monocytogenes serotype 4b (strain F2365)).